The chain runs to 463 residues: Autophagy-related protein 36 (463 aa).

The segment at 5 to 45 (CSICLEVLVDKEAFTEPCLHYYHNECIKEWTKRANTCPKCR) adopts an RING-type; atypical zinc-finger fold. The segment at 85–131 (TNLCALCEDPSTSLIYCESCGGSFHFNCIGIGDELDSEWCCPLCGMF) adopts a PHD-type zinc-finger fold. Residues 229-242 (TQNSQSSEFSTENN) are compositionally biased toward polar residues. The segment at 229-281 (TQNSQSSEFSTENNVVPLKNTHELGRKLKKPRRASGIKKNVVERSSSHQSTQI) is disordered. Residues 255–264 (KLKKPRRASG) are compositionally biased toward basic residues.

As to quaternary structure, interacts with ATG28.

Micropexophagy-specific protein required for efficient micropexophagic apparatus (MIPA) formation but not for general autophagy. This Komagataella phaffii (strain GS115 / ATCC 20864) (Yeast) protein is Autophagy-related protein 36 (ATG35).